Here is a 62-residue protein sequence, read N- to C-terminus: Double zinc ribbon protein TK0111 (62 aa).

Cysteine 13, cysteine 16, cysteine 31, cysteine 34, cysteine 42, cysteine 45, cysteine 54, and cysteine 57 together coordinate Zn(2+).

In terms of assembly, crystallized in association with 70S ribosomes. The cofactor is Zn(2+).

The sequence is that of Double zinc ribbon protein TK0111 from Thermococcus kodakarensis (strain ATCC BAA-918 / JCM 12380 / KOD1) (Pyrococcus kodakaraensis (strain KOD1)).